The sequence spans 198 residues: Ribonuclease HII (198 aa).

One can recognise an RNase H type-2 domain in the interval 10 to 198 (QLVAGVDEVG…PVKRALGLAS (189 aa)). 3 residues coordinate a divalent metal cation: D16, E17, and D108.

Belongs to the RNase HII family. Mn(2+) is required as a cofactor. Requires Mg(2+) as cofactor.

The protein localises to the cytoplasm. The catalysed reaction is Endonucleolytic cleavage to 5'-phosphomonoester.. Functionally, endonuclease that specifically degrades the RNA of RNA-DNA hybrids. The sequence is that of Ribonuclease HII from Escherichia fergusonii (strain ATCC 35469 / DSM 13698 / CCUG 18766 / IAM 14443 / JCM 21226 / LMG 7866 / NBRC 102419 / NCTC 12128 / CDC 0568-73).